We begin with the raw amino-acid sequence, 86 residues long: Diphthamide biosynthesis protein 3 (86 aa).

The DPH-type MB domain occupies 4–60 (YHDEVEIEDFEYDEEEEMYYYPCPCGDRFQISKEELIEGEEVATCPSCSLVIKVIYD). Residues C26, C28, C48, and C51 each coordinate Fe cation.

The protein belongs to the DPH3 family. Component of the 2-(3-amino-3-carboxypropyl)histidine synthase complex composed of Dph1, Dph2, Dph3 and a NADH-dependent reductase. Fe(2+) serves as cofactor.

The enzyme catalyses [3Fe-4S](1+)-[protein] + Fe(2+)-[Dph3] = [3Fe-4S](0)-[protein] + Fe(3+)-[Dph3]. It carries out the reaction 2 [3Fe-4S](0)-[protein] + 2 Fe(2+)-[Dph3] + NADH = 2 [4Fe-4S](1+)-[protein] + 2 [Dph3] + NAD(+) + H(+). It participates in protein modification; peptidyl-diphthamide biosynthesis. Functionally, required for the first step of diphthamide biosynthesis, a post-translational modification of histidine which occurs in elongation factor 2. Dph1 and Dph2 transfer a 3-amino-3-carboxypropyl (ACP) group from S-adenosyl-L-methionine (SAM) to a histidine residue, the reaction is assisted by a reduction system comprising Dph3 and a NADH-dependent reductase. Acts as an electron donor to reduce the Fe-S cluster in Dph1-Dph2 keeping the [4Fe-4S] clusters in the active and reduced state. Restores iron to Dph1-Dph2 iron-sulfur clusters which have degraded from [4Fe-4S] to [3Fe-4S] by donating an iron atom to reform [4Fe-4S] clusters, in a manner dependent on the presence of elongation factor 2 and SAM. Associates with the elongator complex and is required for tRNA Wobble base modifications mediated by the elongator complex. The elongator complex is required for multiple tRNA modifications, including mcm5U (5-methoxycarbonylmethyl uridine), mcm5s 2U (5-methoxycarbonylmethyl-2-thiouridine), and ncm5U (5-carbamoylmethyl uridine). This is Diphthamide biosynthesis protein 3 from Drosophila melanogaster (Fruit fly).